The following is a 267-amino-acid chain: Urease accessory protein UreD (267 aa).

It belongs to the UreD family. As to quaternary structure, ureD, UreF and UreG form a complex that acts as a GTP-hydrolysis-dependent molecular chaperone, activating the urease apoprotein by helping to assemble the nickel containing metallocenter of UreC. The UreE protein probably delivers the nickel.

The protein localises to the cytoplasm. Required for maturation of urease via the functional incorporation of the urease nickel metallocenter. This is Urease accessory protein UreD from Synechococcus sp. (strain JA-2-3B'a(2-13)) (Cyanobacteria bacterium Yellowstone B-Prime).